The sequence spans 503 residues: Hexose transporter 1 (503 aa).

At 1–26 (MKKSSKEISPSQSLKNGGSDHFFNTS) the chain is on the cytoplasmic side. Residues 27 to 47 (LMYVLAACLASFIFGYQVSVL) form a helical membrane-spanning segment. The Extracellular portion of the chain corresponds to 48-76 (NTIKNFIVIEFGWCTGNKVECDDSTLKSS). A disulfide bridge links Cys-61 with Cys-68. A helical membrane pass occupies residues 77-97 (FLLASVFIGAVVGSGFSDYLV). Topologically, residues 98–102 (QHGRR) are cytoplasmic. Residues 103–123 (FSLLVIYNFFILVSILTSITH) form a helical membrane-spanning segment. Residues 124–132 (HFHTILFSR) are Extracellular-facing. A helical transmembrane segment spans residues 133–153 (LLSGFGVGLITVSVPMYISEM). The Cytoplasmic segment spans residues 154–163 (THKDKKGAYG). A helical membrane pass occupies residues 164–184 (VLHQLFITFGILVAVLLGMAM). Gln-167 serves as a coordination point for alpha-D-glucose. Gln-167 contributes to the beta-D-glucose binding site. At 185-205 (GEAPDAKSVDALGEFQKIWWR) the chain is on the extracellular side. The helical transmembrane segment at 206–226 (LMFFFPCLISILGIVLLTFFY) threads the bilayer. The Cytoplasmic segment spans residues 227–291 (KEETPYYLFE…RAMQIPSYRN (65 aa)). The helical transmembrane segment at 292 to 312 (VILLGCILSGLQQFTGINVLV) threads the bilayer. Residues Gln-303, Gln-304, and Asn-309 each contribute to the alpha-D-glucose site. Gln-303 contributes to the beta-D-glucose binding site. Asn-309 is a binding site for beta-D-glucose. Over 313 to 329 (SNSNELYKEFLSNKLIT) the chain is Extracellular. A helical membrane pass occupies residues 330–350 (TLSVIMTVVNFLMTFPAIYIV). Asn-339 lines the beta-D-glucose pocket. Residues 351 to 356 (EKLGRK) lie on the Cytoplasmic side of the membrane. A helical transmembrane segment spans residues 357–377 (TLLLCGCAGVTLAAFLPTAIA). At 378–391 (NQIDRSSDLVRNLS) the chain is on the extracellular side. A helical transmembrane segment spans residues 392–412 (IAATFVMIISFAVSYGPVLWI). Trp-411 is a binding site for alpha-D-glucose. Residues 413-428 (YLHEMFPSEIKDSAAS) are Cytoplasmic-facing. A helical membrane pass occupies residues 429–449 (LASLVNWVCAIIVVFPSDIII). Over 450-454 (KKSPT) the chain is Extracellular. Residues 455-475 (ILFFIFSGMSILSFLFIFFFI) traverse the membrane as a helical segment. At 476–503 (KETKGGEIGTSPYITMEERQKHMGKSAV) the chain is on the cytoplasmic side.

Belongs to the major facilitator superfamily. Sugar transporter (TC 2.A.1.1) family. In terms of assembly, homodimer.

The protein resides in the cell membrane. The enzyme catalyses D-glucose(out) = D-glucose(in). It carries out the reaction D-fructose(out) = D-fructose(in). The catalysed reaction is D-galactose(in) = D-galactose(out). It catalyses the reaction D-mannose(out) = D-mannose(in). The enzyme catalyses D-glucosamine(out) = D-glucosamine(in). It carries out the reaction D-xylose(out) = D-xylose(in). Its activity is regulated as follows. Inhibited by compound 3361 (3-O-((undec-10-en)-1-yl)-D-glucose). Its function is as follows. Sodium-independent facilitative hexose transporter. Can transport D-glucose and D-fructose. Can transport D-mannose, D-galactose, D-xylose and D-glucosamine. This Plasmodium vivax protein is Hexose transporter 1.